A 371-amino-acid polypeptide reads, in one-letter code: Deoxyhypusine synthase (371 aa).

NAD(+)-binding positions include 107–111 (SNLIS), 133–135 (TTG), Glu-139, and Asp-240. 138 to 139 (EE) is a binding site for spermidine. A spermidine-binding site is contributed by Asp-245. Gly-287 provides a ligand contact to NAD(+). His-292 is a spermidine binding site. 312–313 (TA) is a binding site for NAD(+). Residues 318-320 (GSD) and 327-333 (EAVSWGK) contribute to the spermidine site. The active-site Nucleophile is Lys-333. 346–347 (DA) lines the NAD(+) pocket.

Belongs to the deoxyhypusine synthase family. Requires NAD(+) as cofactor. As to expression, expressed in shoot tips.

It catalyses the reaction [eIF5A protein]-L-lysine + spermidine = [eIF5A protein]-deoxyhypusine + propane-1,3-diamine. It functions in the pathway protein modification; eIF5A hypusination. Its function is as follows. Catalyzes the NAD-dependent oxidative cleavage of spermidine and the subsequent transfer of the butylamine moiety of spermidine to the epsilon-amino group of a specific lysine residue of the eIF-5A precursor protein to form the intermediate deoxyhypusine residue. Also able to produce homospermidine from putrescine. This chain is Deoxyhypusine synthase (DHS1), found in Senecio vernalis (Spring groundsel).